A 396-amino-acid polypeptide reads, in one-letter code: tRNA (guanine-N(7)-)-methyltransferase (396 aa).

Residues glutamate 125, glutamate 150, and aspartate 177 each contribute to the S-adenosyl-L-methionine site. Residues lysine 203 and aspartate 233 each contribute to the substrate site.

The protein belongs to the class I-like SAM-binding methyltransferase superfamily. TrmB family.

It catalyses the reaction guanosine(46) in tRNA + S-adenosyl-L-methionine = N(7)-methylguanosine(46) in tRNA + S-adenosyl-L-homocysteine. Its pathway is tRNA modification; N(7)-methylguanine-tRNA biosynthesis. In terms of biological role, catalyzes the formation of N(7)-methylguanine at position 46 (m7G46) in tRNA. This chain is tRNA (guanine-N(7)-)-methyltransferase, found in Helicobacter hepaticus (strain ATCC 51449 / 3B1).